The chain runs to 532 residues: uncharacterized protein (532 aa).

Helical transmembrane passes span 7-26 (HSSY…LGRI), 30-52 (GLSL…GVII), 59-77 (FGLV…PGFF), 87-109 (LIII…KYAF), 116-134 (VVGL…AVAI), and 139-161 (SPLA…ILFV). RCK C-terminal domains lie at 179 to 262 (LEIE…LVGE) and 263 to 346 (REEG…LLGN). Transmembrane regions (helical) follow at residues 356 to 378 (FFPI…SFPG), 388 to 410 (GGVL…LWSM), 446 to 468 (GLLL…AFVG), and 509 to 531 (YATV…ATVV).

The protein belongs to the AAE transporter (TC 2.A.81) family.

It localises to the cell membrane. This is an uncharacterized protein from Bacteroides fragilis (strain YCH46).